We begin with the raw amino-acid sequence, 101 residues long: NAD(P)H-quinone oxidoreductase subunit 4L, chloroplastic (101 aa).

A run of 3 helical transmembrane segments spans residues 2-22 (MLEY…YGLI), 32-52 (MCLE…SYFF), and 61-81 (IFSI…LAIV).

It belongs to the complex I subunit 4L family. NDH is composed of at least 16 different subunits, 5 of which are encoded in the nucleus.

The protein resides in the plastid. The protein localises to the chloroplast thylakoid membrane. It carries out the reaction a plastoquinone + NADH + (n+1) H(+)(in) = a plastoquinol + NAD(+) + n H(+)(out). The catalysed reaction is a plastoquinone + NADPH + (n+1) H(+)(in) = a plastoquinol + NADP(+) + n H(+)(out). In terms of biological role, NDH shuttles electrons from NAD(P)H:plastoquinone, via FMN and iron-sulfur (Fe-S) centers, to quinones in the photosynthetic chain and possibly in a chloroplast respiratory chain. The immediate electron acceptor for the enzyme in this species is believed to be plastoquinone. Couples the redox reaction to proton translocation, and thus conserves the redox energy in a proton gradient. This Ipomoea purpurea (Common morning glory) protein is NAD(P)H-quinone oxidoreductase subunit 4L, chloroplastic.